Consider the following 383-residue polypeptide: Acetylornithine deacetylase (383 aa).

Histidine 80 serves as a coordination point for Zn(2+). Residue aspartate 82 is part of the active site. Aspartate 112 contacts Zn(2+). Residue glutamate 144 is part of the active site. Residues glutamate 145, glutamate 169, and histidine 355 each contribute to the Zn(2+) site.

Belongs to the peptidase M20A family. ArgE subfamily. Homodimer. Requires Zn(2+) as cofactor. Co(2+) is required as a cofactor. It depends on glutathione as a cofactor.

It localises to the cytoplasm. It carries out the reaction N(2)-acetyl-L-ornithine + H2O = L-ornithine + acetate. It functions in the pathway amino-acid biosynthesis; L-arginine biosynthesis; L-ornithine from N(2)-acetyl-L-ornithine (linear): step 1/1. Functionally, catalyzes the hydrolysis of the amide bond of N(2)-acetylated L-amino acids. Cleaves the acetyl group from N-acetyl-L-ornithine to form L-ornithine, an intermediate in L-arginine biosynthesis pathway, and a branchpoint in the synthesis of polyamines. In Escherichia coli O7:K1 (strain IAI39 / ExPEC), this protein is Acetylornithine deacetylase.